We begin with the raw amino-acid sequence, 1390 residues long: DNA-directed RNA polymerase III subunit RPC1 (1390 aa).

Zn(2+)-binding residues include C69, C72, C79, H82, C109, and C112. Residue K144 participates in DNA binding. C156 and C159 together coordinate Zn(2+). DNA contacts are provided by K167, S326, K348, R353, R360, and R366. The residue at position 445 (K445) is an N6-acetyllysine. Residue R464 participates in RNA binding. Positions 499, 501, and 503 each coordinate Mg(2+). Residue D503 coordinates RNA. The bridging helix stretch occupies residues 844 to 856; sequence PTEFFFHTMAGRE. Residues R1159, R1305, and K1323 each contribute to the DNA site.

It belongs to the RNA polymerase beta' chain family. In terms of assembly, component of the RNA polymerase III (Pol III) complex consisting of 17 subunits: a ten-subunit catalytic core composed of POLR3A/RPC1, POLR3B/RPC2, POLR1C/RPAC1, POLR1D/RPAC2, POLR3K/RPC10, POLR2E/RPABC1, POLR2F/RPABC2, POLR2H/RPABC3, POLR2K/RPABC4 and POLR2L/RPABC5; a mobile stalk composed of two subunits POLR3H/RPC8 and CRCP/RPC9, protruding from the core and functioning primarily in transcription initiation; and additional subunits homologous to general transcription factors of the RNA polymerase II machinery, POLR3C/RPC3-POLR3F/RPC6-POLR3G/RPC7 heterotrimer required for transcription initiation and POLR3D/RPC4-POLR3E/RPC5 heterodimer involved in both transcription initiation and termination. As part of the RNA polymerase III complex, interacts with PKP2. Mg(2+) serves as cofactor.

Its subcellular location is the nucleus. It localises to the cytoplasm. It is found in the cytosol. The catalysed reaction is RNA(n) + a ribonucleoside 5'-triphosphate = RNA(n+1) + diphosphate. Functionally, catalytic core component of RNA polymerase III (Pol III), a DNA-dependent RNA polymerase which synthesizes small non-coding RNAs using the four ribonucleoside triphosphates as substrates. Synthesizes 5S rRNA, snRNAs, tRNAs and miRNAs from at least 500 distinct genomic loci. Pol III-mediated transcription cycle proceeds through transcription initiation, transcription elongation and transcription termination stages. During transcription initiation, Pol III is recruited to DNA promoters type I, II or III with the help of general transcription factors and other specific initiation factors. Once the polymerase has escaped from the promoter it enters the elongation phase during which RNA is actively polymerized, based on complementarity with the template DNA strand. Transcription termination involves the release of the RNA transcript and polymerase from the DNA. Forms Pol III active center together with the second largest subunit POLR3B/RPC2. Appends one nucleotide at a time to the 3' end of the nascent RNA, with POLR3A/RPC1 contributing a Mg(2+)-coordinating DxDGD motif, and POLR3B/RPC2 participating in the coordination of a second Mg(2+) ion and providing lysine residues believed to facilitate Watson-Crick base pairing between the incoming nucleotide and template base. Typically, Mg(2+) ions direct a 5' nucleoside triphosphate to form a phosphodiester bond with the 3' hydroxyl of the preceding nucleotide of the nascent RNA, with the elimination of pyrophosphate. Pol III plays a key role in sensing and limiting infection by intracellular bacteria and DNA viruses. Acts as a nuclear and cytosolic DNA sensor involved in innate immune response. Can sense non-self dsDNA that serves as template for transcription into dsRNA. The non-self RNA polymerase III transcripts, such as Epstein-Barr virus-encoded RNAs (EBERs) induce type I interferon and NF-kappa-B through the RIG-I pathway. The chain is DNA-directed RNA polymerase III subunit RPC1 from Bos taurus (Bovine).